The following is a 375-amino-acid chain: MICPVIELAQQLIKRPSLSPSDAGCQEIMIQRLAAIGFTIEPMNFGDTLNFWAWRGEGETLAFAGHTDVVPTGDESHWHSPPFEPTIRDGMLYGRGAADMKGSLAAMIVAAERFVAAHPDHKGRLAFMITSDEEAKAINGTVKVVEALMARHERLDYCLVGEPSSTDRVGDIVKNGRRGSITANLRIHGVQGHVAYPHLADNPVHRAMPALNELVATQWDEGNAFFPATSMQIANLQAGTGSNNVIPGEFYVQFNFRFSTELTDSLIKQRVAALLDRHQLDYTLEWVLSGQPFLTAKGALVDAVVNAVKHYTEITPQLLTTGGTSDGRFIALMGAQVVELGPVNATIHKVNECVSAADLQLLSRMYQKIMEQLIA.

A Zn(2+)-binding site is contributed by H66. The active site involves D68. D99 is a binding site for Zn(2+). E133 serves as the catalytic Proton acceptor. Positions 134, 162, and 348 each coordinate Zn(2+).

The protein belongs to the peptidase M20A family. DapE subfamily. In terms of assembly, homodimer. Zn(2+) serves as cofactor. It depends on Co(2+) as a cofactor.

The enzyme catalyses N-succinyl-(2S,6S)-2,6-diaminopimelate + H2O = (2S,6S)-2,6-diaminopimelate + succinate. It functions in the pathway amino-acid biosynthesis; L-lysine biosynthesis via DAP pathway; LL-2,6-diaminopimelate from (S)-tetrahydrodipicolinate (succinylase route): step 3/3. Functionally, catalyzes the hydrolysis of N-succinyl-L,L-diaminopimelic acid (SDAP), forming succinate and LL-2,6-diaminopimelate (DAP), an intermediate involved in the bacterial biosynthesis of lysine and meso-diaminopimelic acid, an essential component of bacterial cell walls. The protein is Succinyl-diaminopimelate desuccinylase of Yersinia pseudotuberculosis serotype O:1b (strain IP 31758).